The following is a 635-amino-acid chain: Probable ethylene response sensor 2 (635 aa).

A run of 3 helical transmembrane segments spans residues 24 to 44, 59 to 79, and 94 to 114; these read ISDF…IYFV, FGAF…TFAI, and ATAV…PDLL. The Cu cation site is built by cysteine 66 and histidine 70. A GAF domain is found at 159–308; sequence DRHTILRTTL…VVADQVAVAL (150 aa). The 239-residue stretch at 351–589 folds into the Histidine kinase domain; it reads VMNHEMRTPM…MFFVKLGMPE (239 aa). Histidine 354 is modified (phosphohistidine; by autocatalysis).

The protein belongs to the ethylene receptor family. In terms of assembly, homodimer. Cu cation serves as cofactor. Expressed in anthers and hulls.

The protein resides in the endoplasmic reticulum membrane. It carries out the reaction ATP + protein L-histidine = ADP + protein N-phospho-L-histidine.. In terms of biological role, ethylene receptor related to bacterial two-component regulators. Acts as a negative regulator of ethylene signaling. May play a role in the regulation of flowering by up-regulating GI (GIGANTEA) and RCN1 and regulate starch accumulation by down-regulating the alpha-amylase AMY3D. In Oryza sativa subsp. indica (Rice), this protein is Probable ethylene response sensor 2.